The following is a 433-amino-acid chain: Delta-aminolevulinic acid dehydratase, chloroplastic (433 aa).

The transit peptide at 1-56 directs the protein to the chloroplast; that stretch reads MASTFNIPCNAGTIKNFNNSQRNLGFSSNLGINFAKTRFSNCGDSGRIPSQLVVRA. Positions 83–115 are disordered; it reads NAPSAPPVPPTPKAPSGTPSVSPLSLGRRPRRN. Over residues 86–95 the composition is skewed to pro residues; the sequence is SAPPVPPTPK. K301 acts as the Schiff-base intermediate with substrate in catalysis. R311 and K323 together coordinate 5-aminolevulinate. Residue E339 participates in Mg(2+) binding. K354 functions as the Schiff-base intermediate with substrate in the catalytic mechanism. Residues S380 and Y419 each coordinate 5-aminolevulinate.

Belongs to the ALAD family. Homooctamer. It depends on Mg(2+) as a cofactor.

The protein resides in the plastid. The protein localises to the chloroplast. It carries out the reaction 2 5-aminolevulinate = porphobilinogen + 2 H2O + H(+). It participates in porphyrin-containing compound metabolism; protoporphyrin-IX biosynthesis; coproporphyrinogen-III from 5-aminolevulinate: step 1/4. In terms of biological role, catalyzes an early step in the biosynthesis of tetrapyrroles. Binds two molecules of 5-aminolevulinate per subunit, each at a distinct site, and catalyzes their condensation to form porphobilinogen. This chain is Delta-aminolevulinic acid dehydratase, chloroplastic (HEMB), found in Spinacia oleracea (Spinach).